We begin with the raw amino-acid sequence, 620 residues long: MANHSSLPSQKYAASERQEYQKPQQNEEEIFYSVSRAAYLTVFKSSLDNITTKDQLQLVLQQTGRNPSNRVLNKYWTPRTKELNFDDFCAILKKEKPATKNELLKAFRKIDTNNKGYILHNDLYEILTTKGEKMSQEEVNSVFRLAEVNSNGKLDYNKFCSTFFKTCEQCAKVASERMDSNSKAKRQQFGSYIEKSPERSSSPKSSHGNLKLFDSETSTRKENKSSRPSSARSYKATMSTVINMGIPGTRTAKLIEPNNLKDWHTTSTKGCFFLEDNGDIISHHYKLQVSEKSTVYLTIKPLNLSKVEGKPSPWMSVDTSLFILKENNGRADLVSFTELRNQETSGWKGELGVGVYWLIPFTTGCRLRKKKKQTIKEARLVYRDGNEDLVLTPEFKSALSDMFDIIDLDGNGLLSLAEYNFFEMRTSGEKCDLDAWEVCKENFETKKNELTRQGFMELNLMEANDREGDPSDLWVTLQTMGYNKALEMTEACPFVIEVHAEKCSPRLKAVSLESSNKQLQGAVCKSVKLKGDAKPMDRYEDVIVYTYKNDTHVTSVMENKSDEKLILQVNNEQCKNCISSRGLQVFAVELLPKSVMVCQHVMPLNEKQEWMYNCVQNILS.

Positions 1-24 are disordered; it reads MANHSSLPSQKYAASERQEYQKPQ. 2 EF-hand domains span residues 98–133 and 134–169; these read ATKN…KGEK and MSQE…TCEQ. The disordered stretch occupies residues 176 to 234; the sequence is ERMDSNSKAKRQQFGSYIEKSPERSSSPKSSHGNLKLFDSETSTRKENKSSRPSSARSY. A compositionally biased stretch (basic and acidic residues) spans 213–225; sequence FDSETSTRKENKS. The EF-hand 3 domain maps to 394-429; it reads EFKSALSDMFDIIDLDGNGLLSLAEYNFFEMRTSGE. Ca(2+)-binding residues include Asp407, Asp409, Asn411, and Glu418.

It localises to the cell projection. Its subcellular location is the cilium membrane. Plays a role in the ciliary Hedgehog (Hh) signaling. The chain is EF-hand calcium-binding domain-containing protein 7 (efcab7) from Xenopus laevis (African clawed frog).